A 637-amino-acid polypeptide reads, in one-letter code: Probable membrane transporter protein MamO (637 aa).

Residues 1 to 24 (MIEVGETMGELPTNKIVFCERSWK) are Cytoplasmic-facing. The helical transmembrane segment at 25 to 45 (TPVSILAFLIFVTFAWGIYLL) threads the bilayer. Over 46–352 (DHYDEDDNFH…AKIGGYSVAD (307 aa)) the chain is Lumenal. The interval 78–268 (LYHTVPPAVV…VIVSHLQDVV (191 aa)) is protease-like. 2 residues coordinate a divalent metal cation: H148 and H263. The chain crosses the membrane as a helical span at residues 353 to 373 (IVGLVMLALAAGVTGGMMTMG). The tract at residues 370-637 (MTMGGGVLQV…AIALKMLTSV (268 aa)) is TSUP-like. Topologically, residues 374–378 (GGVLQ) are cytoplasmic. A helical transmembrane segment spans residues 379–399 (VAGMMVFFGYGMYLIRPVVFL). Residues 400–416 (TNVVVYGAASLRNDKAQ) lie on the Lumenal side of the membrane. A helical transmembrane segment spans residues 417–437 (LVQWDKVKPLIPWGIAGVILG). Position 438 (Y438) is a topological domain, cytoplasmic. The chain crosses the membrane as a helical span at residues 439 to 459 (FIGNAIGDSVVGILLGLFALI). Topologically, residues 460-517 (MAGKAVMEILQPNAGEETAESISATEAEDEMDELMALADGTSRPKASGLALPEGHARS) are lumenal. A helical membrane pass occupies residues 518 to 538 (AVLGLPMGLFSGILGISGGVI). Over 539-554 (EVPLQRYVGRISLQNA) the chain is Cytoplasmic. Residues 555-575 (IANSSVLVFWASVAGSVVAFL) form a helical membrane-spanning segment. Topologically, residues 576-586 (HGSSTGLIHWE) are lumenal. A helical transmembrane segment spans residues 587-607 (APVTLALVMIPGAYVGGIIGA). Residues 608-616 (RLMRVLPVR) lie on the Cytoplasmic side of the membrane. A helical transmembrane segment spans residues 617-637 (VLKGVYAATMAAIALKMLTSV).

The protein in the N-terminal section; belongs to the peptidase S1C family. This sequence in the C-terminal section; belongs to the 4-toluene sulfonate uptake permease (TSUP) (TC 2.A.102) family. Requires a metal cation as cofactor. In terms of processing, subject to proteolytic cleavage by MamE.

Its subcellular location is the magnetosome membrane. Its function is as follows. Plays 2 roles; promotes magnetite nucleation/formation and activates the MamE protease. Despite its near conservation of a protease-like sequence, this is probably not a protease. Required in conjunction with MamP for proteolysis of at least MamE, itself and MamP. May transport a solute that controls MamE's protease activity. May place individual iron atoms into the magnetite lattice. The polypeptide is Probable membrane transporter protein MamO (mamO) (Paramagnetospirillum magneticum (strain ATCC 700264 / AMB-1) (Magnetospirillum magneticum)).